Here is a 482-residue protein sequence, read N- to C-terminus: C3a anaphylatoxin chemotactic receptor (482 aa).

At 1 to 23 (MASFSAETNSTDLLSQPWNEPPV) the chain is on the extracellular side. A glycan (N-linked (GlcNAc...) asparagine) is linked at asparagine 9. The helical transmembrane segment at 24–46 (ILSMVILSLTFLLGLPGNGLVLW) threads the bilayer. Over 47-57 (VAGLKMQRTVN) the chain is Cytoplasmic. Residues 58-80 (TIWFLHLTLADLLCCLSLPFSLA) traverse the membrane as a helical segment. At 81–96 (HLALQGQWPYGRFLCK) the chain is on the extracellular side. A disulfide bridge connects residues cysteine 95 and cysteine 172. The helical transmembrane segment at 97–118 (LIPSIIVLNMFASVFLLTAISL) threads the bilayer. The Cytoplasmic segment spans residues 119–139 (DRCLVVFKPIWCQNHRNVGMA). The helical transmembrane segment at 140–160 (CSICGCIWVVAFVMCIPVFVY) threads the bilayer. Residues 161–340 (REIFTTDNHN…TPLVAITITR (180 aa)) are Extracellular-facing. Residues tyrosine 174 and tyrosine 184 each carry the sulfotyrosine modification. An N-linked (GlcNAc...) asparagine glycan is attached at asparagine 194. The O-linked (GalNAc...) serine glycan is linked to serine 266. Tyrosine 318 carries the post-translational modification Sulfotyrosine. Residues 341–360 (LVVGFLLPSVIMIACYSFIV) form a helical membrane-spanning segment. Residues 361–377 (FRMQRGRFAKSQSKTFR) are Cytoplasmic-facing. Residues 378–400 (VAVVVVAVFLVCWTPYHIFGVLS) form a helical membrane-spanning segment. The Extracellular segment spans residues 401-417 (LLTDPETPLGKTLMSWD). Residues 418–438 (HVCIALASANSCFNPFLYALL) form a helical membrane-spanning segment. Residues 439–482 (GKDFRKKARQSIQGILEAAFSEELTRSTHCPSNNVISERNSTTV) are Cytoplasmic-facing. Serine 459 carries the post-translational modification Phosphoserine. Position 463 is a phosphothreonine (threonine 463).

The protein belongs to the G-protein coupled receptor 1 family. Interacts with VGF-derived peptide TLQP-21. Post-translationally, among the sulfation sites Tyr-174 is essential for binding of C3a anaphylatoxin. O-glycosylated. Widely expressed in several differentiated hematopoietic cell lines, in the lung, spleen, ovary, placenta, small intestine, throughout the brain, heart, and endothelial cells. Mostly expressed in lymphoid tissues.

The protein resides in the cell membrane. Receptor for the chemotactic and inflammatory peptide anaphylatoxin C3a. This receptor stimulates chemotaxis, granule enzyme release and superoxide anion production. The protein is C3a anaphylatoxin chemotactic receptor (C3AR1) of Homo sapiens (Human).